An 809-amino-acid chain; its full sequence is Ribosome biogenesis protein ERB1 (809 aa).

Positions M1–I107 are disordered. Acidic residues-rich tracts occupy residues A30–D70 and L77–E97. The segment at R267–S383 is required for interaction with NOP7. The tract at residues S383–P419 is required for interaction with YTM1. WD repeat units lie at residues G435–N474 and N483–E523. Residues E545–V569 are disordered. Acidic residues predominate over residues G553 to S563. WD repeat units lie at residues Q593–P635, K638–K676, P679–K718, Y722–T762, and V778–T809.

The protein belongs to the WD repeat BOP1/ERB1 family. In terms of assembly, component of the NOP7 complex, composed of ERB1, NOP7 and YTM1. The complex is held together by ERB1, which interacts with NOP7 via its N-terminal domain and with YTM1 via a high-affinity interaction between the seven-bladed beta-propeller domains of the 2 proteins. The NOP7 complex associates with the 66S pre-ribosome.

The protein resides in the nucleus. The protein localises to the nucleolus. Its subcellular location is the nucleoplasm. In terms of biological role, component of the NOP7 complex, which is required for maturation of the 25S and 5.8S ribosomal RNAs and formation of the 60S ribosome. The chain is Ribosome biogenesis protein ERB1 from Scheffersomyces stipitis (strain ATCC 58785 / CBS 6054 / NBRC 10063 / NRRL Y-11545) (Yeast).